The primary structure comprises 457 residues: Serine--tRNA ligase (457 aa).

Residue 252–254 (TAE) participates in L-serine binding. ATP contacts are provided by residues 283–285 (RKE) and Val299. Position 306 (Glu306) interacts with L-serine. Position 370–373 (370–373 (EMVS)) interacts with ATP. Thr406 contributes to the L-serine binding site.

It belongs to the class-II aminoacyl-tRNA synthetase family. Type-1 seryl-tRNA synthetase subfamily. Homodimer. The tRNA molecule binds across the dimer.

The protein localises to the cytoplasm. The enzyme catalyses tRNA(Ser) + L-serine + ATP = L-seryl-tRNA(Ser) + AMP + diphosphate + H(+). It catalyses the reaction tRNA(Sec) + L-serine + ATP = L-seryl-tRNA(Sec) + AMP + diphosphate + H(+). Its pathway is aminoacyl-tRNA biosynthesis; selenocysteinyl-tRNA(Sec) biosynthesis; L-seryl-tRNA(Sec) from L-serine and tRNA(Sec): step 1/1. In terms of biological role, catalyzes the attachment of serine to tRNA(Ser). Is also able to aminoacylate tRNA(Sec) with serine, to form the misacylated tRNA L-seryl-tRNA(Sec), which will be further converted into selenocysteinyl-tRNA(Sec). This Saccharolobus solfataricus (strain ATCC 35092 / DSM 1617 / JCM 11322 / P2) (Sulfolobus solfataricus) protein is Serine--tRNA ligase.